The primary structure comprises 335 residues: Thioredoxin-related transmembrane protein 4 (335 aa).

Residues 1-20 (MTGGFCVPVLLAAWLAAAAA) form the signal peptide. One can recognise a Thioredoxin domain in the interval 26–133 (AALPAEESRV…YEDLQNYILE (108 aa)). Residues C60 and C63 each act as nucleophile in the active site. Residues C60 and C63 are joined by a disulfide bond. A helical membrane pass occupies residues 186-206 (VFFVIATLVFGLFMGLILVVI). Residues 222–316 (CEQEQSTGEA…EDGAHPADTQ (95 aa)) form a disordered region. The segment covering 238-280 (QDAEEEKDDSNEEENKDSLVDDEEEKEDIGDEDEGEEDEEEDN) has biased composition (acidic residues). Phosphoserine is present on residues S247 and S255. A compositionally biased stretch (basic and acidic residues) spans 286–298 (AEERSDTNERAVV).

The protein resides in the nucleus inner membrane. Its subcellular location is the endoplasmic reticulum membrane. The chain is Thioredoxin-related transmembrane protein 4 (Tmx4) from Mus musculus (Mouse).